A 215-amino-acid chain; its full sequence is Glutaredoxin 2 (215 aa).

A GST N-terminal domain is found at 1–77; the sequence is MKLYIYDHCP…YVDKLDGKPL (77 aa). An intrachain disulfide couples C9 to C12.

This sequence belongs to the glutaredoxin family.

Its function is as follows. Involved in reducing some disulfides in a coupled system with glutathione reductase. Does not act as hydrogen donor for ribonucleotide reductase. The chain is Glutaredoxin 2 (grxB) from Escherichia coli O157:H7.